Reading from the N-terminus, the 239-residue chain is Ribose-5-phosphate isomerase A (239 aa).

Residues 40-43, 96-99, and 110-113 contribute to the substrate site; these read SGST, DGAD, and KGGG. Glutamate 119 (proton acceptor) is an active-site residue. Lysine 137 contributes to the substrate binding site.

It belongs to the ribose 5-phosphate isomerase family. Homodimer.

It carries out the reaction aldehydo-D-ribose 5-phosphate = D-ribulose 5-phosphate. The protein operates within carbohydrate degradation; pentose phosphate pathway; D-ribose 5-phosphate from D-ribulose 5-phosphate (non-oxidative stage): step 1/1. Catalyzes the reversible conversion of ribose-5-phosphate to ribulose 5-phosphate. The polypeptide is Ribose-5-phosphate isomerase A (Methanococcus maripaludis (strain C6 / ATCC BAA-1332)).